We begin with the raw amino-acid sequence, 119 residues long: Holo-[acyl-carrier-protein] synthase (119 aa).

Asp7 and Glu56 together coordinate Mg(2+).

Belongs to the P-Pant transferase superfamily. AcpS family. Mg(2+) serves as cofactor.

Its subcellular location is the cytoplasm. It carries out the reaction apo-[ACP] + CoA = holo-[ACP] + adenosine 3',5'-bisphosphate + H(+). In terms of biological role, transfers the 4'-phosphopantetheine moiety from coenzyme A to a Ser of acyl-carrier-protein. The polypeptide is Holo-[acyl-carrier-protein] synthase (Chlamydia trachomatis serovar L2 (strain ATCC VR-902B / DSM 19102 / 434/Bu)).